The primary structure comprises 61 residues: Large ribosomal subunit protein bL32 (61 aa).

The interval 1–44 is disordered; it reads MAVQQNRKSRSRRDMRRSHDALTENALTVDQATGETHRRHHVTK. Positions 7–16 are enriched in basic residues; that stretch reads RKSRSRRDMR. Over residues 25–34 the composition is skewed to polar residues; the sequence is NALTVDQATG.

This sequence belongs to the bacterial ribosomal protein bL32 family.

This is Large ribosomal subunit protein bL32 from Acinetobacter baumannii (strain AB307-0294).